The chain runs to 395 residues: Protochlorophyllide reductase B, chloroplastic (395 aa).

A chloroplast-targeting transit peptide spans 1 to 59 (MALQAATSFLPSALSARKEGAAKDSAFFGVRLADGLKLDATSLGLRTKRVNTSSVAIRA).

It belongs to the short-chain dehydrogenases/reductases (SDR) family. POR subfamily.

The protein localises to the plastid. Its subcellular location is the chloroplast. It catalyses the reaction chlorophyllide a + NADP(+) = protochlorophyllide a + NADPH + H(+). It participates in porphyrin-containing compound metabolism; chlorophyll biosynthesis. Its function is as follows. Phototransformation of protochlorophyllide (Pchlide) to chlorophyllide (Chlide). This Hordeum vulgare (Barley) protein is Protochlorophyllide reductase B, chloroplastic (PORB).